A 37-amino-acid polypeptide reads, in one-letter code: Large ribosomal subunit protein bL36 (37 aa).

It belongs to the bacterial ribosomal protein bL36 family.

In Trichlorobacter lovleyi (strain ATCC BAA-1151 / DSM 17278 / SZ) (Geobacter lovleyi), this protein is Large ribosomal subunit protein bL36.